The chain runs to 1076 residues: MSYPQAPSKFVNPDEIIPLSPPTKPPFAQYAASPLPATPHTPYSPPSPSRLSETIPLRPYLSLLPRILLTFFSPCLLPMILTIAHLIQNRSSTASLATSLKSSVLSACSGLAKAAASIKTLPRYLAMQTNQEAIRATQASILAIGTMLMDAITIIEAVVNFIVDTYRSLLLCTIELAVRGTLEILISAVQTISDAVTDTLNSVRSNIQDDIGDANDIIQTAVSAINRVTTLVNLNISVPEFSIPALSFLQNVTIPTTFEDGLITLNSSLPTLTDLKKKMDEIIDTPFEALISEINSTRLEMAASFNSSILSVPSLSSLSANSANDLSNDLCSDLDTSLIDDTAKALHKLSSIAIGLMFLLLFLIWAALAVWEWRKWKLMKDTVDAVNEEWDRDGKSDAWRMVAIVEHPVLERYSGTFLGKIAKMPRTRTNLRWFLSYLAHPTCLALLFISLFGFLSIQFQLVALNALKAHAQSSANSTVTASTNSLVTKLNAAALNSSQEYADSYNEAIAGYQDRINNELFGSWVNTTAVTLNSTLVEFYDEVEKALNASFGGTILYNPINTFMYCILGSKITNLEKGLTWISEHAFVDLPTFPSDILLLSNDSMNEIATPIAAAAVGSGDGGDDDDGVVGTLISHFESALKVERTFYGIMLGVWLALFLIGLAVVIWNSGGREKFMALRGVPSSSSPPGYGPPESKHPRWKAWLTNNHPIYDSYAEKQFRGTTPTNCLESYTHADVPNVNNGNDDHEKSFFKMRDSHAAGPFGSHATSAVRSTIASLAAPGQSFLKLSGRKLTDTTTPYDDKVPLAPVQTSEKYSRDHANSPFPRPSSESSESSAAQPFWVDKFYGAFEGVKSFFPTRSQRLGAALARKASQRTEGSFGASQVPTARTPGHDWIGGHQCLPEKKAEPEWSMVDPRMLGRALEDDKGRYPRVLPPSEMAAANYNPHPVYPRPMSRASTLGEGMVIPSTTSHPDPFQDMPPLPPKHKRASMDYVEEYESSHSRSSREDSRHGGVTSPASSSVSYFAAEPQLVSASKVQVGVAQKGGQATRALAEIVKELQEKRERKDPFGDDYERGL.

The disordered stretch occupies residues 1–31 (MSYPQAPSKFVNPDEIIPLSPPTKPPFAQYA). At 1–66 (MSYPQAPSKF…LRPYLSLLPR (66 aa)) the chain is on the extracellular side. Residues 67–87 (ILLTFFSPCLLPMILTIAHLI) traverse the membrane as a helical segment. Over 88–138 (QNRSSTASLATSLKSSVLSACSGLAKAAASIKTLPRYLAMQTNQEAIRATQ) the chain is Cytoplasmic. The chain crosses the membrane as a helical span at residues 139 to 159 (ASILAIGTMLMDAITIIEAVV). Over 160–350 (NFIVDTYRSL…DTAKALHKLS (191 aa)) the chain is Extracellular. N-linked (GlcNAc...) asparagine glycans are attached at residues Asn-235, Asn-251, Asn-266, Asn-295, and Asn-306. Residues 351–371 (SIAIGLMFLLLFLIWAALAVW) traverse the membrane as a helical segment. Topologically, residues 372–432 (EWRKWKLMKD…KMPRTRTNLR (61 aa)) are cytoplasmic. The helical transmembrane segment at 433 to 455 (WFLSYLAHPTCLALLFISLFGFL) threads the bilayer. Topologically, residues 456–646 (SIQFQLVALN…FESALKVERT (191 aa)) are extracellular. N-linked (GlcNAc...) asparagine glycosylation is found at Asn-476, Asn-496, Asn-526, Asn-533, Asn-548, and Asn-602. The chain crosses the membrane as a helical span at residues 647-667 (FYGIMLGVWLALFLIGLAVVI). Topologically, residues 668–1076 (WNSGGREKFM…PFGDDYERGL (409 aa)) are cytoplasmic. Disordered regions lie at residues 796 to 834 (TTTP…SSES), 874 to 899 (RTEG…GGHQ), 963 to 1020 (MVIP…ASSS), and 1057 to 1076 (ELQE…ERGL). Positions 874–886 (RTEGSFGASQVPT) are enriched in polar residues. The segment covering 997–1010 (ESSHSRSSREDSRH) has biased composition (basic and acidic residues).

Belongs to the PRM1 family.

The protein resides in the cell membrane. Its function is as follows. Involved in cell fusion during mating by stabilizing the plasma membrane fusion event. In Cryptococcus neoformans var. neoformans serotype D (strain JEC21 / ATCC MYA-565) (Filobasidiella neoformans), this protein is Plasma membrane fusion protein PRM1 (PRM1).